A 660-amino-acid polypeptide reads, in one-letter code: DNA mismatch repair protein MutL (660 aa).

A compositionally biased stretch (polar residues) spans 341–355; it reads SFQSDGAPPTQQLSS. Disordered stretches follow at residues 341–362 and 378–398; these read SFQSDGAPPTQQLSSDVREKAE and ALSPTKQELPKSPERSERVER. Positions 385–398 are enriched in basic and acidic residues; it reads ELPKSPERSERVER.

It belongs to the DNA mismatch repair MutL/HexB family.

This protein is involved in the repair of mismatches in DNA. It is required for dam-dependent methyl-directed DNA mismatch repair. May act as a 'molecular matchmaker', a protein that promotes the formation of a stable complex between two or more DNA-binding proteins in an ATP-dependent manner without itself being part of a final effector complex. This is DNA mismatch repair protein MutL from Heliobacterium modesticaldum (strain ATCC 51547 / Ice1).